A 1366-amino-acid polypeptide reads, in one-letter code: DNA-directed RNA polymerase subunit beta'' (1366 aa).

Positions 220, 290, 297, and 300 each coordinate Zn(2+).

The protein belongs to the RNA polymerase beta' chain family. RpoC2 subfamily. As to quaternary structure, in plastids the minimal PEP RNA polymerase catalytic core is composed of four subunits: alpha, beta, beta', and beta''. When a (nuclear-encoded) sigma factor is associated with the core the holoenzyme is formed, which can initiate transcription. It depends on Zn(2+) as a cofactor.

It is found in the plastid. Its subcellular location is the chloroplast. The catalysed reaction is RNA(n) + a ribonucleoside 5'-triphosphate = RNA(n+1) + diphosphate. DNA-dependent RNA polymerase catalyzes the transcription of DNA into RNA using the four ribonucleoside triphosphates as substrates. The sequence is that of DNA-directed RNA polymerase subunit beta'' from Lemna minor (Common duckweed).